A 526-amino-acid chain; its full sequence is Peptide chain release factor 3 (526 aa).

The 269-residue stretch at 9 to 277 (DKRRTFAIIS…GIVEWAPIPQ (269 aa)) folds into the tr-type G domain. GTP is bound by residues 18-25 (SHPDAGKT), 86-90 (DTPGH), and 140-143 (NKLD).

The protein belongs to the TRAFAC class translation factor GTPase superfamily. Classic translation factor GTPase family. PrfC subfamily.

It is found in the cytoplasm. Increases the formation of ribosomal termination complexes and stimulates activities of RF-1 and RF-2. It binds guanine nucleotides and has strong preference for UGA stop codons. It may interact directly with the ribosome. The stimulation of RF-1 and RF-2 is significantly reduced by GTP and GDP, but not by GMP. The sequence is that of Peptide chain release factor 3 from Shewanella halifaxensis (strain HAW-EB4).